The following is a 647-amino-acid chain: Zinc finger CCCH domain-containing protein 19 (647 aa).

C3H1-type zinc fingers lie at residues 16 to 45 and 47 to 73; these read RRRS…HSDA and RMNP…HPPL. Residues 78–106 are disordered; that stretch reads GAPTTPRTSQQSAPQVSVPAQAPVPNPAS. Low complexity predominate over residues 86–106; that stretch reads SQQSAPQVSVPAQAPVPNPAS. Residues 109–136 form a C3H1-type 3 zinc finger; it reads AKQGVPCYYFQKGMCVKGDRCAFLHLPQ. 5 disordered regions span residues 155–280, 308–327, 335–452, 512–580, and 586–605; these read VPHP…RTNG, LSES…DSSD, QRRL…DAES, LKRK…LSPA, and EAAD…ETAE. Composition is skewed to polar residues over residues 160–175 and 189–203; these read LKNS…QQNA and NGKT…NRAG. A compositionally biased stretch (basic and acidic residues) spans 267 to 280; sequence SLREDRGAYRRTNG. The segment covering 347–359 has biased composition (basic and acidic residues); sequence SDRHNVYPEDERH. Over residues 369-379 the composition is skewed to polar residues; it reads QASNDGVSSSR. Basic and acidic residues predominate over residues 419-433; it reads LRGKLHDRLKAKPNE. Residues 435 to 445 show a composition bias toward polar residues; sequence VSGNVQSSLSK. The segment covering 527 to 536 has biased composition (basic and acidic residues); that stretch reads GSKREEHSGG.

The sequence is that of Zinc finger CCCH domain-containing protein 19 from Oryza sativa subsp. japonica (Rice).